A 461-amino-acid chain; its full sequence is Argininosuccinate lyase (461 aa).

This sequence belongs to the lyase 1 family. Argininosuccinate lyase subfamily.

It localises to the cytoplasm. The enzyme catalyses 2-(N(omega)-L-arginino)succinate = fumarate + L-arginine. It functions in the pathway amino-acid biosynthesis; L-arginine biosynthesis; L-arginine from L-ornithine and carbamoyl phosphate: step 3/3. The protein is Argininosuccinate lyase of Dehalococcoides mccartyi (strain ATCC BAA-2266 / KCTC 15142 / 195) (Dehalococcoides ethenogenes (strain 195)).